The following is a 247-amino-acid chain: Adenosylcobinamide-GDP ribazoletransferase (247 aa).

A run of 5 helical transmembrane segments spans residues 34–54 (IVMFPLIGAILGGLSGLIFIL), 59–79 (CGIPLAALFCILALALLTGGF), 113–133 (GGLALIFVLLAKILVVSELAL), 138–158 (VLAALAAACAAGRGSAALLMY), and 194–214 (VLLPGMQGLAAIVITLAAIFI).

The protein belongs to the CobS family. Requires Mg(2+) as cofactor.

It localises to the cell inner membrane. It carries out the reaction alpha-ribazole + adenosylcob(III)inamide-GDP = adenosylcob(III)alamin + GMP + H(+). It catalyses the reaction alpha-ribazole 5'-phosphate + adenosylcob(III)inamide-GDP = adenosylcob(III)alamin 5'-phosphate + GMP + H(+). It functions in the pathway cofactor biosynthesis; adenosylcobalamin biosynthesis; adenosylcobalamin from cob(II)yrinate a,c-diamide: step 7/7. Functionally, joins adenosylcobinamide-GDP and alpha-ribazole to generate adenosylcobalamin (Ado-cobalamin). Also synthesizes adenosylcobalamin 5'-phosphate from adenosylcobinamide-GDP and alpha-ribazole 5'-phosphate. The polypeptide is Adenosylcobinamide-GDP ribazoletransferase (Salmonella arizonae (strain ATCC BAA-731 / CDC346-86 / RSK2980)).